The following is a 234-amino-acid chain: UPF0173 metal-dependent hydrolase Atu1317 (234 aa).

The protein belongs to the UPF0173 family.

The chain is UPF0173 metal-dependent hydrolase Atu1317 from Agrobacterium fabrum (strain C58 / ATCC 33970) (Agrobacterium tumefaciens (strain C58)).